The sequence spans 266 residues: Potassium/proton antiporter CemA (266 aa).

3 consecutive transmembrane segments (helical) span residues 46–66, 151–171, and 226–246; these read VIVSVRCLITLIFVPLFINIL, FLSFLSLSVVFLLLKPQIIIL, and FMSLFVATFPVFLDTVFKYWI.

The protein belongs to the CemA family.

The protein resides in the plastid. It localises to the chloroplast inner membrane. The enzyme catalyses K(+)(in) + H(+)(out) = K(+)(out) + H(+)(in). Contributes to K(+)/H(+) antiport activity by supporting proton efflux to control proton extrusion and homeostasis in chloroplasts in a light-dependent manner to modulate photosynthesis. Prevents excessive induction of non-photochemical quenching (NPQ) under continuous-light conditions. Indirectly promotes efficient inorganic carbon uptake into chloroplasts. This chain is Potassium/proton antiporter CemA, found in Chlorella vulgaris (Green alga).